A 268-amino-acid polypeptide reads, in one-letter code: NH(3)-dependent NAD(+) synthetase (268 aa).

46–53 (GVSGGQDS) provides a ligand contact to ATP. A Mg(2+)-binding site is contributed by Asp52. Arg140 lines the deamido-NAD(+) pocket. Thr160 contacts ATP. Glu165 contacts Mg(2+). The deamido-NAD(+) site is built by Lys173 and Asp180. Lys189 provides a ligand contact to ATP. 260 to 261 (HK) is a binding site for deamido-NAD(+).

This sequence belongs to the NAD synthetase family. As to quaternary structure, homodimer.

The catalysed reaction is deamido-NAD(+) + NH4(+) + ATP = AMP + diphosphate + NAD(+) + H(+). It functions in the pathway cofactor biosynthesis; NAD(+) biosynthesis; NAD(+) from deamido-NAD(+) (ammonia route): step 1/1. Functionally, catalyzes the ATP-dependent amidation of deamido-NAD to form NAD. Uses ammonia as a nitrogen source. The sequence is that of NH(3)-dependent NAD(+) synthetase from Buchnera aphidicola subsp. Acyrthosiphon pisum (strain APS) (Acyrthosiphon pisum symbiotic bacterium).